A 429-amino-acid chain; its full sequence is Chaperone SurA (429 aa).

The signal sequence occupies residues Met1–Ala18. PpiC domains follow at residues Asn170–Ala271 and Ile281–Ala380.

It is found in the periplasm. It carries out the reaction [protein]-peptidylproline (omega=180) = [protein]-peptidylproline (omega=0). Chaperone involved in the correct folding and assembly of outer membrane proteins. Recognizes specific patterns of aromatic residues and the orientation of their side chains, which are found more frequently in integral outer membrane proteins. May act in both early periplasmic and late outer membrane-associated steps of protein maturation. The protein is Chaperone SurA of Legionella pneumophila subsp. pneumophila (strain Philadelphia 1 / ATCC 33152 / DSM 7513).